The following is a 368-amino-acid chain: 4-hydroxy-3-methylbut-2-en-1-yl diphosphate synthase (flavodoxin) (368 aa).

Residues Cys271, Cys274, Cys306, and Glu313 each contribute to the [4Fe-4S] cluster site.

The protein belongs to the IspG family. [4Fe-4S] cluster serves as cofactor.

It catalyses the reaction (2E)-4-hydroxy-3-methylbut-2-enyl diphosphate + oxidized [flavodoxin] + H2O + 2 H(+) = 2-C-methyl-D-erythritol 2,4-cyclic diphosphate + reduced [flavodoxin]. It participates in isoprenoid biosynthesis; isopentenyl diphosphate biosynthesis via DXP pathway; isopentenyl diphosphate from 1-deoxy-D-xylulose 5-phosphate: step 5/6. In terms of biological role, converts 2C-methyl-D-erythritol 2,4-cyclodiphosphate (ME-2,4cPP) into 1-hydroxy-2-methyl-2-(E)-butenyl 4-diphosphate. In Buchnera aphidicola subsp. Acyrthosiphon pisum (strain APS) (Acyrthosiphon pisum symbiotic bacterium), this protein is 4-hydroxy-3-methylbut-2-en-1-yl diphosphate synthase (flavodoxin).